The primary structure comprises 566 residues: MAWRNQGITGSNNIPLGRRRFGGEDGPEEESRTATPASVGGDNGIKRGRSPVRADPPADGVKRRKKRNRWGDAQENKAAGLMGLPTMIMANFTNEQLEAYTLHLRIEEISQKLRINDVVPADGDRSPSPPPQYDNFGRRVNTREYRYRKRLEDERHKLVEKAMKTIPNYHPPSDYRRPTKTQEKVYVPVNDYPEINFIGLLIGPRGNTLKKMEAESGAKIAIRGKGSVKEGKGRSDAAHASNQEEDLHCLIMADTEEKVNKAKKLVHNVIETAASIPEGQNELKRNQLRELAALNGTLRDDENQACQNCGQIGHRKYDCPEQRNFTANIICRVCGNAGHMARDCPDRQRGSDWRNGGGYGGGRRAIGQGDAVDREMEQLMQELSGGAPGPDGQPPRRIEAGPDHGYDDRDVKPWQRGPPPSDVAPWQQRGRDNRSRDDYGSRDQGSAPPWAAQSRGGDYGYGSHAGGYGAPGAGAATSGAAPWHQQAPPPPPGGASAYGYGAYPGYGAAVPGMGAPGAPPGLSVPPPPPGMPSMYYGSGSPPPPPPGEGPPPPPPSELPPPPPPSA.

Residues M1–I14 show a composition bias toward polar residues. The interval M1–K77 is disordered. One can recognise a KH domain in the interval Y186–V266. 2 consecutive CCHC-type zinc fingers follow at residues Q304–E321 and I329–D346. Basic and acidic residues predominate over residues A341–D352. 2 disordered regions span residues A341–G367 and E382–A566. Over residues N355–R364 the composition is skewed to gly residues. 2 stretches are compositionally biased toward basic and acidic residues: residues P394–P413 and R429–S441. The span at G457–G472 shows a compositional bias: gly residues. Low complexity-rich tracts occupy residues A473–Q486 and G494–M513. Composition is skewed to pro residues over residues G517–M531 and S540–A566.

It belongs to the BBP/SF1 family.

Its subcellular location is the nucleus. Necessary for the splicing of pre-mRNA. Has a role in the recognition of the branch site (5'-UACUAAC-3'), the pyrimidine tract and the 3'-splice site at the 3'-end of introns. The protein is Branchpoint-bridging protein (bbp) of Aspergillus fumigatus (strain ATCC MYA-4609 / CBS 101355 / FGSC A1100 / Af293) (Neosartorya fumigata).